The chain runs to 323 residues: Elongation factor P--(R)-beta-lysine ligase (323 aa).

Substrate is bound at residue 76 to 78 (SPE). ATP-binding positions include 100–102 (RNE) and Asn109. Position 118 (Tyr118) interacts with substrate. 242-243 (EL) serves as a coordination point for ATP. A substrate-binding site is contributed by Glu249. Gly298 contributes to the ATP binding site.

Belongs to the class-II aminoacyl-tRNA synthetase family. EpmA subfamily. In terms of assembly, homodimer.

The catalysed reaction is D-beta-lysine + L-lysyl-[protein] + ATP = N(6)-((3R)-3,6-diaminohexanoyl)-L-lysyl-[protein] + AMP + diphosphate + H(+). Its function is as follows. With EpmB is involved in the beta-lysylation step of the post-translational modification of translation elongation factor P (EF-P). Catalyzes the ATP-dependent activation of (R)-beta-lysine produced by EpmB, forming a lysyl-adenylate, from which the beta-lysyl moiety is then transferred to the epsilon-amino group of a conserved specific lysine residue in EF-P. This Haemophilus influenzae (strain ATCC 51907 / DSM 11121 / KW20 / Rd) protein is Elongation factor P--(R)-beta-lysine ligase.